A 129-amino-acid polypeptide reads, in one-letter code: Histone H2A type 2-C (129 aa).

The tract at residues 1–22 (MSGRGKQGGKARAKAKSRSSRA) is disordered. Position 2 is an N-acetylserine (S2). Position 2 is a phosphoserine; by RPS6KA5 (S2). R4 carries the citrulline; alternate modification. At R4 the chain carries Symmetric dimethylarginine; by PRMT5; alternate. Residues K6 and K10 each carry the N6-(2-hydroxyisobutyryl)lysine; alternate modification. An N6-acetyllysine; alternate modification is found at K6. Over residues 7-19 (QGGKARAKAKSRS) the composition is skewed to basic residues. K10 carries the post-translational modification N6-lactoyllysine; alternate. An N6-succinyllysine; alternate modification is found at K10. Glycyl lysine isopeptide (Lys-Gly) (interchain with G-Cter in ubiquitin) cross-links involve residues K14 and K16. The residue at position 37 (K37) is an N6-(2-hydroxyisobutyryl)lysine; alternate. Residue K37 is modified to N6-(beta-hydroxybutyryl)lysine; alternate. At K37 the chain carries N6-crotonyllysine; alternate. 2 positions are modified to N6-(2-hydroxyisobutyryl)lysine: K75 and K76. An N6-(2-hydroxyisobutyryl)lysine; alternate modification is found at K96. The residue at position 96 (K96) is an N6-succinyllysine; alternate. An N6-glutaryllysine; alternate modification is found at K96. K100 is subject to N6-glutaryllysine. Q105 carries the post-translational modification N5-methylglutamine. The residue at position 119 (K119) is an N6-(2-hydroxyisobutyryl)lysine; alternate. K119 and K120 each carry N6-crotonyllysine; alternate. An N6-glutaryllysine; alternate mark is found at K119 and K120. A Glycyl lysine isopeptide (Lys-Gly) (interchain with G-Cter in ubiquitin); alternate cross-link involves residue K120. A Phosphothreonine; by DCAF1 modification is found at T121. Position 123 is a phosphoserine (S123). K125 is modified (N6-crotonyllysine).

This sequence belongs to the histone H2A family. As to quaternary structure, the nucleosome is a histone octamer containing two molecules each of H2A, H2B, H3 and H4 assembled in one H3-H4 heterotetramer and two H2A-H2B heterodimers. The octamer wraps approximately 147 bp of DNA. Post-translationally, deiminated on Arg-4 in granulocytes upon calcium entry. Monoubiquitination of Lys-120 (H2AK119Ub) by RING1, TRIM37 and RNF2/RING2 complex gives a specific tag for epigenetic transcriptional repression and participates in X chromosome inactivation of female mammals. It is involved in the initiation of both imprinted and random X inactivation. Ubiquitinated H2A is enriched in inactive X chromosome chromatin. Ubiquitination of H2A functions downstream of methylation of 'Lys-27' of histone H3 (H3K27me). H2AK119Ub by RNF2/RING2 can also be induced by ultraviolet and may be involved in DNA repair. Following DNA double-strand breaks (DSBs), it is ubiquitinated through 'Lys-63' linkage of ubiquitin moieties by the E2 ligase UBE2N and the E3 ligases RNF8 and RNF168, leading to the recruitment of repair proteins to sites of DNA damage. Ubiquitination at Lys-14 and Lys-16 (H2AK13Ub and H2AK15Ub, respectively) in response to DNA damage is initiated by RNF168 that mediates monoubiquitination at these 2 sites, and 'Lys-63'-linked ubiquitin are then conjugated to monoubiquitin; RNF8 is able to extend 'Lys-63'-linked ubiquitin chains in vitro. H2AK119Ub and ionizing radiation-induced 'Lys-63'-linked ubiquitination (H2AK13Ub and H2AK15Ub) are distinct events. In terms of processing, phosphorylation on Ser-2 (H2AS1ph) is enhanced during mitosis. Phosphorylation on Ser-2 by RPS6KA5/MSK1 directly represses transcription. Acetylation of H3 inhibits Ser-2 phosphorylation by RPS6KA5/MSK1. Phosphorylation at Thr-121 (H2AT120ph) by DCAF1 is present in the regulatory region of many tumor suppresor genes and down-regulates their transcription. Post-translationally, symmetric dimethylation on Arg-4 by the PRDM1/PRMT5 complex may play a crucial role in the germ-cell lineage. Glutamine methylation at Gln-105 (H2AQ104me) by FBL is specifically dedicated to polymerase I. It is present at 35S ribosomal DNA locus and impairs binding of the FACT complex. In terms of processing, crotonylation (Kcr) is specifically present in male germ cells and marks testis-specific genes in post-meiotic cells, including X-linked genes that escape sex chromosome inactivation in haploid cells. Crotonylation marks active promoters and enhancers and confers resistance to transcriptional repressors. It is also associated with post-meiotically activated genes on autosomes. Post-translationally, lactylated in macrophages by EP300/P300 by using lactoyl-CoA directly derived from endogenous or exogenous lactate, leading to stimulates gene transcription.

The protein localises to the nucleus. It localises to the chromosome. Its function is as follows. Core component of nucleosome. Nucleosomes wrap and compact DNA into chromatin, limiting DNA accessibility to the cellular machineries which require DNA as a template. Histones thereby play a central role in transcription regulation, DNA repair, DNA replication and chromosomal stability. DNA accessibility is regulated via a complex set of post-translational modifications of histones, also called histone code, and nucleosome remodeling. This is Histone H2A type 2-C from Bos taurus (Bovine).